A 221-amino-acid chain; its full sequence is MWSAGRGGAAWPVLLGLLLALLVPGGGAAKTGAELVTCGSVLKLLNTHHRVRLHSHDIKYGSGSGQQSVTGVEASDDANSYWRIRGGSEGGCPRGSPVRCGQAVRLTHVLTGKNLHTHHFPSPLSNNQEVSAFGEDGEGDDLDLWTVRCSGQHWEREAAVRFQHVGTSVFLSVTGEQYGSPIRGQHEVHGMPSANTHNTWKAMEGIFIKPSVEPSAGHDEL.

Residues 1 to 28 (MWSAGRGGAAWPVLLGLLLALLVPGGGA) form the signal peptide. MIR domains are found at residues 33–87 (AELV…IRGG), 95–150 (GSPV…VRCS), and 151–205 (GQHW…AMEG). The residue at position 215 (S215) is a Phosphoserine. Positions 218–221 (HDEL) match the Prevents secretion from ER motif.

Part of a large chaperone multiprotein complex comprising CABP1, DNAJB11, HSP90B1, HSPA5, HYOU, PDIA2, PDIA4, PPIB, SDF2L1, UGGT1 and very small amounts of ERP29, but not, or at very low levels, CALR nor CANX. As to expression, ubiquitously expressed with high expression in testis, moderate expression in the pancreas, spleen, prostate, small intestine and colon. Very low expression is seen in brain and skeletal muscle.

The protein resides in the endoplasmic reticulum lumen. This chain is Stromal cell-derived factor 2-like protein 1 (SDF2L1), found in Homo sapiens (Human).